Here is a 130-residue protein sequence, read N- to C-terminus: Small ribosomal subunit protein uS8 (130 aa).

It belongs to the universal ribosomal protein uS8 family. In terms of assembly, part of the 30S ribosomal subunit.

Functionally, one of the primary rRNA binding proteins, it binds directly to 16S rRNA central domain where it helps coordinate assembly of the platform of the 30S subunit. The sequence is that of Small ribosomal subunit protein uS8 from Methanocella arvoryzae (strain DSM 22066 / NBRC 105507 / MRE50).